Here is a 257-residue protein sequence, read N- to C-terminus: Imidazole glycerol phosphate synthase subunit HisF (257 aa).

Active-site residues include aspartate 12 and aspartate 131.

This sequence belongs to the HisA/HisF family. In terms of assembly, heterodimer of HisH and HisF.

The protein localises to the cytoplasm. The enzyme catalyses 5-[(5-phospho-1-deoxy-D-ribulos-1-ylimino)methylamino]-1-(5-phospho-beta-D-ribosyl)imidazole-4-carboxamide + L-glutamine = D-erythro-1-(imidazol-4-yl)glycerol 3-phosphate + 5-amino-1-(5-phospho-beta-D-ribosyl)imidazole-4-carboxamide + L-glutamate + H(+). It participates in amino-acid biosynthesis; L-histidine biosynthesis; L-histidine from 5-phospho-alpha-D-ribose 1-diphosphate: step 5/9. IGPS catalyzes the conversion of PRFAR and glutamine to IGP, AICAR and glutamate. The HisF subunit catalyzes the cyclization activity that produces IGP and AICAR from PRFAR using the ammonia provided by the HisH subunit. The protein is Imidazole glycerol phosphate synthase subunit HisF of Paraburkholderia xenovorans (strain LB400).